A 216-amino-acid polypeptide reads, in one-letter code: Hexitol phosphatase A (216 aa).

Residue aspartate 9 is the Nucleophile of the active site. A divalent metal cation-binding residues include aspartate 9 and aspartate 11. Residues 9 to 11 (DLD), 106 to 107 (TS), and lysine 138 each bind substrate. Aspartate 11 (proton donor) is an active-site residue. Aspartate 163 provides a ligand contact to a divalent metal cation.

The protein belongs to the HAD-like hydrolase superfamily. CbbY/CbbZ/Gph/YieH family. Requires Mg(2+) as cofactor. Mn(2+) is required as a cofactor. The cofactor is Co(2+).

The catalysed reaction is sugar phosphate + H2O = sugar + phosphate.. It catalyses the reaction D-mannitol 1-phosphate + H2O = D-mannitol + phosphate. The enzyme catalyses D-sorbitol 6-phosphate + H2O = D-sorbitol + phosphate. Sugar-phosphate phosphohydrolase that appears to contribute to butanol tolerance. Catalyzes the dephosphorylation of D-mannitol 1-phosphate and D-sorbitol 6-phosphate. Is also able to dephosphorylate other sugar phosphates in vitro including ribose-5-phosphate (Rib5P), 2-deoxyribose-5-phosphate, fructose-1-phosphate (Fru1P), fructose-6-phosphate (Fru6P), and glucose-6-phosphate (Glu6P). Selectively hydrolyzes beta-D-glucose-1-phosphate (bGlu1P) and has no activity with the alpha form. The polypeptide is Hexitol phosphatase A (Escherichia coli (strain K12)).